The primary structure comprises 253 residues: Protein C1orf43 homolog (253 aa).

The chain crosses the membrane as a helical span at residues 11 to 31 (VNVVLVMAYGSLVFVLLFIFV). The disordered stretch occupies residues 194–213 (SGSSQRQHQSAAKDLTQSPE).

Its subcellular location is the membrane. It is found in the golgi apparatus. The protein resides in the mitochondrion. General regulator of phagocytosis. Required to uptake Gram negative bacterium by macrophages. The polypeptide is Protein C1orf43 homolog (Bos taurus (Bovine)).